We begin with the raw amino-acid sequence, 173 residues long: Putative pre-16S rRNA nuclease (173 aa).

It belongs to the YqgF nuclease family.

It localises to the cytoplasm. Could be a nuclease involved in processing of the 5'-end of pre-16S rRNA. The chain is Putative pre-16S rRNA nuclease from Psychrobacter cryohalolentis (strain ATCC BAA-1226 / DSM 17306 / VKM B-2378 / K5).